The following is a 227-amino-acid chain: ATP-dependent Clp protease proteolytic subunit (227 aa).

The active-site Nucleophile is S123. Residue H148 is part of the active site.

It belongs to the peptidase S14 family. As to quaternary structure, fourteen ClpP subunits assemble into 2 heptameric rings which stack back to back to give a disk-like structure with a central cavity, resembling the structure of eukaryotic proteasomes.

It localises to the cytoplasm. The enzyme catalyses Hydrolysis of proteins to small peptides in the presence of ATP and magnesium. alpha-casein is the usual test substrate. In the absence of ATP, only oligopeptides shorter than five residues are hydrolyzed (such as succinyl-Leu-Tyr-|-NHMec, and Leu-Tyr-Leu-|-Tyr-Trp, in which cleavage of the -Tyr-|-Leu- and -Tyr-|-Trp bonds also occurs).. Functionally, cleaves peptides in various proteins in a process that requires ATP hydrolysis. Has a chymotrypsin-like activity. Plays a major role in the degradation of misfolded proteins. The sequence is that of ATP-dependent Clp protease proteolytic subunit from Chlorobium phaeobacteroides (strain DSM 266 / SMG 266 / 2430).